A 799-amino-acid polypeptide reads, in one-letter code: Serine/threonine-protein kinase AfsK (799 aa).

A Protein kinase domain is found at 16-271 (FEVLGRLGAG…QAQLAPHLFG (256 aa)). Residues 22-30 (LGAGGMGLV) and Lys-44 each bind ATP. A Phosphoserine; by autocatalysis modification is found at Ser-71. Asp-138 acts as the Proton acceptor in catalysis. Phosphothreonine; by autocatalysis is present on Thr-168. 2 disordered regions span residues 295–343 (RRNG…PAPP) and 393–426 (LAAS…PAGW). 2 stretches are compositionally biased toward pro residues: residues 325 to 343 (HAPP…PAPP) and 411 to 421 (VPAPAPAPPEA).

This sequence belongs to the protein kinase superfamily. Ser/Thr protein kinase family. In terms of assembly, interacts (via the N-terminal kinase domain) with KbpA; the interaction prevents autophosphorylation of AfsK. Post-translationally, autophosphorylated mainly on threonine residues. Some phosphorylation on serine residues. Autophosphorylation on Thr-168 is the major site enhancing kinase activity towards AfsR, and is regulated though interaction with KbpA.

The catalysed reaction is L-seryl-[protein] + ATP = O-phospho-L-seryl-[protein] + ADP + H(+). It catalyses the reaction L-threonyl-[protein] + ATP = O-phospho-L-threonyl-[protein] + ADP + H(+). Functionally, involved in the regulation of secondary metabolism by phosphorylating, on both Ser and Thr, the AfsR global regulatory protein involved in the control of secondary metabolism. The sequence is that of Serine/threonine-protein kinase AfsK (afsK) from Streptomyces coelicolor (strain ATCC BAA-471 / A3(2) / M145).